The sequence spans 362 residues: UDP-N-acetylglucosamine--N-acetylmuramyl-(pentapeptide) pyrophosphoryl-undecaprenol N-acetylglucosamine transferase (362 aa).

UDP-N-acetyl-alpha-D-glucosamine contacts are provided by residues 10–12, Asn-124, Arg-161, Ser-195, and Gln-291; that span reads TAG.

The protein belongs to the glycosyltransferase 28 family. MurG subfamily.

Its subcellular location is the cell membrane. It catalyses the reaction di-trans,octa-cis-undecaprenyl diphospho-N-acetyl-alpha-D-muramoyl-L-alanyl-D-glutamyl-meso-2,6-diaminopimeloyl-D-alanyl-D-alanine + UDP-N-acetyl-alpha-D-glucosamine = di-trans,octa-cis-undecaprenyl diphospho-[N-acetyl-alpha-D-glucosaminyl-(1-&gt;4)]-N-acetyl-alpha-D-muramoyl-L-alanyl-D-glutamyl-meso-2,6-diaminopimeloyl-D-alanyl-D-alanine + UDP + H(+). The protein operates within cell wall biogenesis; peptidoglycan biosynthesis. Cell wall formation. Catalyzes the transfer of a GlcNAc subunit on undecaprenyl-pyrophosphoryl-MurNAc-pentapeptide (lipid intermediate I) to form undecaprenyl-pyrophosphoryl-MurNAc-(pentapeptide)GlcNAc (lipid intermediate II). This chain is UDP-N-acetylglucosamine--N-acetylmuramyl-(pentapeptide) pyrophosphoryl-undecaprenol N-acetylglucosamine transferase, found in Streptomyces collinus.